A 216-amino-acid chain; its full sequence is Thymidine kinase (216 aa).

Residues 9–16 and 86–89 contribute to the ATP site; these read GTMDCGKS and DEAQ. The Proton acceptor role is filled by E87.

Belongs to the thymidine kinase family. In terms of assembly, homotetramer.

It localises to the cytoplasm. It catalyses the reaction thymidine + ATP = dTMP + ADP + H(+). This Streptomyces coelicolor (strain ATCC BAA-471 / A3(2) / M145) protein is Thymidine kinase.